A 125-amino-acid chain; its full sequence is Small ribosomal subunit protein uS12 (125 aa).

Position 89 is a 3-methylthioaspartic acid (D89).

The protein belongs to the universal ribosomal protein uS12 family. Part of the 30S ribosomal subunit. Contacts proteins S8 and S17. May interact with IF1 in the 30S initiation complex.

Functionally, with S4 and S5 plays an important role in translational accuracy. In terms of biological role, interacts with and stabilizes bases of the 16S rRNA that are involved in tRNA selection in the A site and with the mRNA backbone. Located at the interface of the 30S and 50S subunits, it traverses the body of the 30S subunit contacting proteins on the other side and probably holding the rRNA structure together. The combined cluster of proteins S8, S12 and S17 appears to hold together the shoulder and platform of the 30S subunit. This chain is Small ribosomal subunit protein uS12, found in Clostridium botulinum (strain Alaska E43 / Type E3).